A 532-amino-acid chain; its full sequence is Phosphoenolpyruvate carboxykinase (ATP) (532 aa).

Substrate is bound by residues Arg-60, Tyr-194, and Lys-200. Residues Lys-200, His-219, and 237–245 contribute to the ATP site; that span reads GLSGTGKTT. Positions 200 and 219 each coordinate Mn(2+). Asp-258 is a Mn(2+) binding site. 3 residues coordinate ATP: Glu-286, Arg-324, and Thr-449. Arg-324 provides a ligand contact to substrate.

It belongs to the phosphoenolpyruvate carboxykinase (ATP) family. Mn(2+) is required as a cofactor.

The protein resides in the cytoplasm. The catalysed reaction is oxaloacetate + ATP = phosphoenolpyruvate + ADP + CO2. It participates in carbohydrate biosynthesis; gluconeogenesis. Involved in the gluconeogenesis. Catalyzes the conversion of oxaloacetate (OAA) to phosphoenolpyruvate (PEP) through direct phosphoryl transfer between the nucleoside triphosphate and OAA. In Paracoccus denitrificans (strain Pd 1222), this protein is Phosphoenolpyruvate carboxykinase (ATP).